A 598-amino-acid chain; its full sequence is Protein HIGH CHLOROPHYLL FLUORESCENCE PHENOTYPE 173, chloroplastic (598 aa).

The transit peptide at 1 to 79 (MVGSIVGSNM…ITTKESEETV (79 aa)) directs the protein to the chloroplast. Residues 42–106 (VIPRAQSSSS…PTLKLDDVNP (65 aa)) form a disordered region. Over residues 73 to 84 (KESEETVAKKLD) the composition is skewed to basic and acidic residues. Residues 87 to 97 (PPSPQSPPSPP) are compositionally biased toward pro residues.

It belongs to the NmrA-type oxidoreductase family. As to quaternary structure, component of a high molecular weight complex containing psbA mRNA, OHP1, OHP2 and HCF244, and PSII core proteins D1/D2, HCF136 and HCF173. Interacts with LPE1.

The protein resides in the plastid. The protein localises to the chloroplast membrane. It localises to the chloroplast thylakoid membrane. It is found in the chloroplast stroma. Its function is as follows. Auxiliary factor required, together with HCF244, for the biogenesis of photosystem II (PSII), especially for the synthesis of the reaction center proteins (e.g. D1), via the regulation of the corresponding mRNA (e.g. psbA) translation initiation (ribosomal loading) and stabilization. The polypeptide is Protein HIGH CHLOROPHYLL FLUORESCENCE PHENOTYPE 173, chloroplastic (Arabidopsis thaliana (Mouse-ear cress)).